A 325-amino-acid chain; its full sequence is MKQEYIPLDEFPNKSNEGMLNDEGTSSSGLSTRTRSLELFDNMEESGSFPKVERKIQSLLDELAEVLFQSKQPNDLTRIRKAIAEQLQLWCQACQENADLYRSQQRKLKSRWDSQTDILSQIESTKASLAEVHKAEEISNLKTSITHLDEEIQILQEKLAIVTNQRNTLVKRLQTYDNLEKKKALSMEDRLLTLQEQYDAHANVSSLEKRMEVLKKREDLLRLMVGQALPGMQFFQRLIHQIQAVETKLISILGPTSLSEAALPPLTDVQRTSVLSLLTSTLHSLESARQIADSNTWKPIIVCLELEIVYFENMLTAITSTPVSS.

The interval 1-32 (MKQEYIPLDEFPNKSNEGMLNDEGTSSSGLST) is disordered. Positions 23–32 (EGTSSSGLST) are enriched in low complexity. The stretch at 135 to 223 (AEEISNLKTS…LKKREDLLRL (89 aa)) forms a coiled coil.

It is found in the cytoplasm. Its subcellular location is the cytoskeleton. The protein resides in the microtubule organizing center. It localises to the spindle pole body. This is an uncharacterized protein from Schizosaccharomyces pombe (strain 972 / ATCC 24843) (Fission yeast).